A 2079-amino-acid chain; its full sequence is MAEPRPGGYNYKTLLCRNIPELFLDKYVARSHFGRFGTLVNFVLRPRRMTCTVSYASEDEAARALLDGASFQGHLFDISYADNETAPAQKTEEWVDPDIQAELSALQSGWRNEYGSGKPIKKPQNGSSGSGGSSMLPAIPVGPATAPVSRDRTPAQLRDLENMMRRPAHTSEEKFSVLDARDKLLRLNRTQHKLSGATQGHCADMCPEKERVLREFQRQVAYYELQPGSDELICHERALKQYSRSSADQETPLPHELRNETALHMTMSYLMHEIMDISERQDPQSHMGDWFHFVWDRTRSIRKEITQQELCSLGAVKLVEQCARFHIHCAARLVDADPSVFDSKINAENLTKCLQTLKYMYHDLRIKGVPCPKEAEFRGYIVLLNLADANFLWDIGQLPAELQSCPEVRQAIQFYLALQDTNFVRFFQLLADKDTSYLSACILVNYFTRLRVLGLHRLIQAYRSPRKDEVSSLPLSYIAELLSFASEQEAADFVQHYGLQINEAGRVVLSRMHTVETEYKLPRQYELVEVKRVKSVGEVVSGEPLPPRDLYLNHRPHNSFDDYGMLKSIAWTAKDQLAGMQQEEMQPQMPSQPPAVSKHSDTLFKVPMQPDGTAAGFGVFAAAAVPPASSIDGFSFVLPKSRAQEFQEQAPATQQRRAQEEAKHQALQVAIAAAKKREAELMAIHEAKVAEAERVRQQKLRERQEQQRRQQQELEEQRQREQEKLQLEKERQLKLEQLFFVQQQEREAHKQTRTLELYQEIFQDTLAEICQSEFMSHSRACRSYESMLDSITRDLVERQMEQSIYELGVMRVCIRRWRKYRRTQQEKDTLFNQLPLSFGAENPEGVVNKRSMEDSLRLSRRYRLGEPCDYGKLLAGLEEHSWLKLDLWHVLDKCLPVAQPGARRFYKLLISLSGGQEGLQLNCDLDRGLLQQPQSPDARFVDGGYIRGFSQGIGLSVMKIRDDDHDWKATDLAEANGIICLIGLDDIRLLPDRLKPLLQASRCHDVAVIVQHPANTAFVQPDIPLQELCLRSFNIFRLRKSGNNRQRLMIALESAVKFLAKATERKRVGHLHQVETREYLLVNLGSELFRRLKYAAEHDTAIRSDTQLNPQRCVDLFNEAVHRLQLVAGEDLSDWPQFPEELRVFVQPLPIESSLNTNRLEHFEPGWHLPERRQRIVQLLERCKLPKMPVLPRSSSLAEAQCQWVLDYAQISQQEDCVEQIALQAIKILQYDTDDYLNFVEYLAGERMQYILRQERNPPQGIVYNTKTLKRRFLSAWYYEFREPQIYEPVPAEENAQMLEKQPSSQAEVQQLDFDEITSKAEAVLKRFHQRQDERHTLRELNRSHKSRKRRDASDHKHAMSSLVSALKAARSDYQGKSSAVCRLVAQMVEADQVKYQWTPNLTSLIDRKDASTRHQWRPHVNHSTRHARKLPVQSISFLSRCLAKKGEHAGLTSCVLSVKTRYAPKTLHGRELLIWRQSSMRPLLLPSSNLWTGVLSKRHYVPRLRPAEEDEEVERRAVPQLRITKEQSEEEEHQLQRRKDGSRLRNECSEFYLPMGEQDYSEREEENRGHRQAYVPSELMTPELATKWQTTSVTDRDRQLLNLEQQMKTQPSVRMTTQTWFSGNHRRYRSRRSGAKRYHVVSELEGWRRSSNHQPVPVFQGQPGEQEHLRHASHKASARSMPDGQERCQMVWEQKKRSPWHRTEVTNSNKVRMPRIRAAKSAVMMAQEARNKHHRLITKKLVYRPRRTVNAVQAEETEDQDTHHRHHGGGQKMSKRAPERALLKQHLADLLAVSKPEDSFRIGYQPNAPTRQLLEQGKCYVSLRREQFIHLHPVRPNSLILAVNLEVKESPRQPVTTLHRRDGAKRPRLVEDVVKPSLITVIRQSAATWDHNGRKVPAKKSNLVGMPSKEHAYQRRLVRNTSTLEAIVKAQAKPRSEPKSPSSATDYHRVASQKLPHVTSKADISKAADPFKDLDKPRIKEKEVASSWKQAYVVRSKMYDAITPYRRRAYPGKKCITKDKTDGYFLAKRSSAAAAGSSKKVKPPKQPVVSPKVQVPSVLHKKKSRESLGPQTTKTGKL.

The RRM domain occupies lysine 12–asparagine 83. Positions asparagine 112–arginine 152 are disordered. Residues aspartate 342 to tyrosine 525 form the PCI domain. Residues proline 835 to alanine 1359 form a sufficient for Orc3 binding region. 4 disordered regions span residues arginine 1335–methionine 1360, alanine 1755–alanine 1778, lysine 1930–alanine 1963, and serine 2032–leucine 2079. The segment covering histidine 1764–lysine 1776 has biased composition (basic residues). The segment covering proline 2048 to valine 2059 has biased composition (low complexity). Residues glycine 2070 to leucine 2079 show a composition bias toward polar residues.

It belongs to the SAC3 family. Component of the nuclear pore complex (NPC)-associated TREX-2/AMEX complex (anchoring and mRNA export complex), composed of e(y)2, xmas and PCID2. Within the TREX-2/ AMEX complex, interactions with e(y)2 is required for localization of e(y)2 to the nuclear periphery. Interaction between the TREX-2/AMEX complex and the ORC complex is required for ORC localization to mRNPs, and consequently mRNA export. Within the TREX-2/AMEX-ORC complex, interacts with Orc6, (via C-terminus) with Orc3, and weakly interacts with Orc4. However, another report found that the interaction with Orc3 is not direct, instead it is mediated via e(y)2. Interacts with piwi. As to expression, expressed in ovaries (at protein level). Detected in the testes and ovaries, with expression levels higher in oocytes than in testicular cells (at protein level). In terms of tissue distribution, detected in the testes and ovaries (at protein level). As to expression, detected in the testes.

The protein localises to the nucleus. Its subcellular location is the nucleoplasm. It localises to the nucleus membrane. The protein resides in the cytoplasm. Functionally, involved in mRNA export and mRNA coupled transcription activation. Component of the nuclear pore complex (NPC)-associated TREX-2/AMEX complex (anchoring and mRNA export complex) which functions in docking export-competent ribonucleoprotein particles (mRNPs) to the nuclear entrance of the nuclear pore complex (nuclear basket), thereby enabling the export of mRNAs to the cytoplasm through the nuclear pores. The TREX-2/AMEX complex also functions with the transcriptional coactivator SAGA/TFTC complex, to anchor a subset of transcription sites to the nuclear pore complex basket in order to achieve efficient transcription and export of their resulting mRNAs. Within the complex, required for localization of e(y)2 to the nuclear periphery. The chain is Protein xmas from Drosophila melanogaster (Fruit fly).